The primary structure comprises 463 residues: Ribosomal protein uS12 methylthiotransferase RimO (463 aa).

Residues 15–130 (PKVGFVSLGC…VMQAVHSHLP (116 aa)) enclose the MTTase N-terminal domain. The [4Fe-4S] cluster site is built by cysteine 24, cysteine 60, cysteine 89, cysteine 161, cysteine 165, and cysteine 168. A Radical SAM core domain is found at 147–392 (LTPRHYAYLK…MEVAEQVSAK (246 aa)). In terms of domain architecture, TRAM spans 395–463 (ARKVGKTLKV…ADGHDLWGEV (69 aa)).

This sequence belongs to the methylthiotransferase family. RimO subfamily. It depends on [4Fe-4S] cluster as a cofactor.

It localises to the cytoplasm. It carries out the reaction L-aspartate(89)-[ribosomal protein uS12]-hydrogen + (sulfur carrier)-SH + AH2 + 2 S-adenosyl-L-methionine = 3-methylsulfanyl-L-aspartate(89)-[ribosomal protein uS12]-hydrogen + (sulfur carrier)-H + 5'-deoxyadenosine + L-methionine + A + S-adenosyl-L-homocysteine + 2 H(+). Catalyzes the methylthiolation of an aspartic acid residue of ribosomal protein uS12. The chain is Ribosomal protein uS12 methylthiotransferase RimO from Paraburkholderia phymatum (strain DSM 17167 / CIP 108236 / LMG 21445 / STM815) (Burkholderia phymatum).